The sequence spans 111 residues: Mitochondrial import inner membrane translocase subunit Tim10B (111 aa).

The short motif at 24 to 48 is the Twin CX3C motif element; that stretch reads CFNACARDYTTSTLTKDEGSCVSQC. 2 disulfide bridges follow: cysteine 24–cysteine 48 and cysteine 28–cysteine 44. The segment at 73–111 is disordered; the sequence is KQGEQSPTEAIKSAKPEPAVPAPEATPVETTPVIEENKQ. A compositionally biased stretch (low complexity) spans 94-105; sequence APEATPVETTPV.

It belongs to the small Tim family. In terms of assembly, component of the TIM22 complex, whose core is composed of tim-22, associated with peripheral protein tin-9.2/tim-10b and the 70 kDa heterohexamer. In most cases, the 70 kDa complex is composed of TIMM9 and TIMM10.

It is found in the mitochondrion inner membrane. Functionally, component of the TIM22 complex, a complex that mediates the import and insertion of multi-pass transmembrane proteins into the mitochondrial inner membrane. The TIM22 complex forms a twin-pore translocase that uses the membrane potential as the external driving force. In the TIM22 complex, it may act as a docking point for the soluble 70 kDa complex that guides the target proteins in transit through the aqueous mitochondrial intermembrane space. The chain is Mitochondrial import inner membrane translocase subunit Tim10B (tin-9.2) from Caenorhabditis elegans.